A 24-amino-acid chain; its full sequence is Brevinin-1Bf (24 aa).

Cys-18 and Cys-24 are oxidised to a cystine.

Expressed by the skin glands.

It is found in the secreted. Its function is as follows. Antibacterial activity against Gram-positive bacterium S.aureus and Gram-negative bacterium E.coli. In Lithobates berlandieri (Rio Grande leopard frog), this protein is Brevinin-1Bf.